Consider the following 906-residue polypeptide: Ribonucleoside-diphosphate reductase large subunit-like protein (906 aa).

Disordered regions lie at residues 1 to 70 (MNPA…AGNT) and 89 to 129 (VSWR…LSTF). Over residues 98–109 (PDGTPSVLSLTR) the composition is skewed to polar residues.

The protein belongs to the ribonucleoside diphosphate reductase large chain family.

The protein resides in the virion. It localises to the host cytoplasm. Does not possess a ribonucleotide reductase activity. Betaherpesviruses probably use another strategy to expand the dNTP pool in a quiescent host cell. This Homo sapiens (Human) protein is Ribonucleoside-diphosphate reductase large subunit-like protein.